The chain runs to 132 residues: Small ribosomal subunit protein uS8 (132 aa).

Belongs to the universal ribosomal protein uS8 family. In terms of assembly, part of the 30S ribosomal subunit. Contacts proteins S5 and S12.

Its function is as follows. One of the primary rRNA binding proteins, it binds directly to 16S rRNA central domain where it helps coordinate assembly of the platform of the 30S subunit. The sequence is that of Small ribosomal subunit protein uS8 from Brucella ovis (strain ATCC 25840 / 63/290 / NCTC 10512).